A 352-amino-acid chain; its full sequence is DNA-directed RNA polymerase subunit alpha (352 aa).

An alpha N-terminal domain (alpha-NTD) region spans residues Met1–Glu236. The alpha C-terminal domain (alpha-CTD) stretch occupies residues Ser257 to Gly352.

Belongs to the RNA polymerase alpha chain family. As to quaternary structure, homodimer. The RNAP catalytic core consists of 2 alpha, 1 beta, 1 beta' and 1 omega subunit. When a sigma factor is associated with the core the holoenzyme is formed, which can initiate transcription.

The catalysed reaction is RNA(n) + a ribonucleoside 5'-triphosphate = RNA(n+1) + diphosphate. Its function is as follows. DNA-dependent RNA polymerase catalyzes the transcription of DNA into RNA using the four ribonucleoside triphosphates as substrates. The protein is DNA-directed RNA polymerase subunit alpha of Sphingopyxis alaskensis (strain DSM 13593 / LMG 18877 / RB2256) (Sphingomonas alaskensis).